A 2462-amino-acid polypeptide reads, in one-letter code: Non-reducing polyketide synthase ausA (2462 aa).

An N-terminal acylcarrier protein transacylase domain (SAT) region spans residues 16–253 (VFFGPVYPEL…HTADHIPAMK (238 aa)). Residues 385 to 801 (SAPIAVTGFA…GSNAVIVVKE (417 aa)) form the Ketosynthase family 3 (KS3) domain. Active-site for beta-ketoacyl synthase activity residues include C550, H685, and H724. A malonyl-CoA:ACP transacylase (MAT) domain region spans residues 904–1208 (LCFGGQTGDT…LPIDLQESTA (305 aa)). The active-site For acyl/malonyl transferase activity is the S991. Residues 1274–1403 (HDDGLLQLVE…GKVLLDPQAA (130 aa)) are N-terminal hotdog fold. A PKS/mFAS DH domain is found at 1274-1581 (HDDGLLQLVE…FTSVSIQSLK (308 aa)). Residues 1277 to 1580 (GLLQLVERDA…TFTSVSIQSL (304 aa)) form a product template (PT) domain region. The active-site Proton acceptor; for dehydratase activity is H1307. Residues 1431-1581 (SSNGLKRATV…FTSVSIQSLK (151 aa)) are C-terminal hotdog fold. Catalysis depends on D1489, which acts as the Proton donor; for dehydratase activity. Residues 1613 to 1690 (VSDDHHLRAV…GLAHRISPSS (78 aa)) form the Carrier domain. The residue at position 1650 (S1650) is an O-(pantetheine 4'-phosphoryl)serine. Positions 1850-2083 (QHASEHKLLR…GFNWVDWTDN (234 aa)) are methyltransferase (CMeT) domain. Residues 2112–2462 (TPARVETVRY…YEFLRQHVAV (351 aa)) form a thioesterase (TE) domain region. Catalysis depends on for thioesterase activity residues S2235, D2398, and H2430.

The enzyme catalyses 3 malonyl-CoA + acetyl-CoA + 2 S-adenosyl-L-methionine = 3,5-dimethylorsellinate + 2 S-adenosyl-L-homocysteine + 3 CO2 + 4 CoA. It functions in the pathway secondary metabolite biosynthesis; terpenoid biosynthesis. Functionally, non-reducing polyketide synthase; part of the gene cluster that mediates the biosynthesis of calidodehydroaustin, a fungal meroterpenoid. The first step of the pathway is the synthesis of 3,5-dimethylorsellinic acid by the polyketide synthase ausA. 3,5-dimethylorsellinic acid is then prenylated by the polyprenyl transferase ausN. Further epoxidation by the FAD-dependent monooxygenase ausM and cyclization by the probable terpene cyclase ausL lead to the formation of protoaustinoid A. Protoaustinoid A is then oxidized to spiro-lactone preaustinoid A3 by the combined action of the FAD-binding monooxygenases ausB and ausC, and the dioxygenase ausE. Acid-catalyzed keto-rearrangement and ring contraction of the tetraketide portion of preaustinoid A3 by ausJ lead to the formation of preaustinoid A4. The aldo-keto reductase ausK, with the help of ausH, is involved in the next step by transforming preaustinoid A4 into isoaustinone which is in turn hydroxylated by the P450 monooxygenase ausI to form austinolide. The cytochrome P450 monooxygenase ausG modifies austinolide to austinol. Austinol is further acetylated to austin by the O-acetyltransferase ausP, which spontaneously changes to dehydroaustin. The cytochrome P450 monooxygenase ausR then converts dehydroaustin is into 7-dehydrodehydroaustin. The hydroxylation catalyzed by ausR permits the O-acetyltransferase ausQ to add an additional acetyl group to the molecule, leading to the formation of acetoxydehydroaustin. The short chain dehydrogenase ausT catalyzes the reduction of the double bond present between carbon atoms 1 and 2 to convert 7-dehydrodehydroaustin into 1,2-dihydro-7-hydroxydehydroaustin. AusQ catalyzes not only an acetylation reaction but also the addition of the PKS ausV diketide product to 1,2-dihydro-7-hydroxydehydroaustin, forming precalidodehydroaustin. Finally, the iron/alpha-ketoglutarate-dependent dioxygenase converts precalidodehydroaustin into calidodehydroaustin. In Aspergillus calidoustus, this protein is Non-reducing polyketide synthase ausA.